The primary structure comprises 427 residues: Peptidase B (427 aa).

2 residues coordinate Mn(2+): K195 and D200. Residue K207 is part of the active site. Residues D218, D277, and E279 each coordinate Mn(2+). Residue R281 is part of the active site.

This sequence belongs to the peptidase M17 family. In terms of assembly, homohexamer. Mn(2+) serves as cofactor.

Its subcellular location is the cytoplasm. It carries out the reaction Release of an N-terminal amino acid, Xaa, from a peptide or arylamide. Xaa is preferably Glu or Asp but may be other amino acids, including Leu, Met, His, Cys and Gln.. In terms of biological role, probably plays an important role in intracellular peptide degradation. The chain is Peptidase B from Escherichia coli O139:H28 (strain E24377A / ETEC).